The primary structure comprises 299 residues: 5,10-dihydrophenazine-1-carboxylate 9-dimethylallyltransferase (299 aa).

This sequence belongs to the aromatic prenyltransferase family.

It carries out the reaction 5,10-dihydrophenazine 1-carboxylate + dimethylallyl diphosphate = 5,10-dihydro-9-dimethylallylphenazine 1-carboxylate + diphosphate. The protein operates within antibiotic biosynthesis; phenazine biosynthesis. With respect to regulation, does not require magnesium or any other divalent metal ions for activity. Functionally, involved in the biosynthesis of prenylated phenazines. Catalyzes the transfer of a dimethylallyl moiety to C-9 of 5,10-dihydrophenazine 1-carboxylate (dihydro-PCA). Specific for both dimethylallyl diphosphate and dihydro-PCA. This chain is 5,10-dihydrophenazine-1-carboxylate 9-dimethylallyltransferase, found in Streptomyces anulatus (Streptomyces chrysomallus).